Reading from the N-terminus, the 338-residue chain is Photosystem II assembly lipoprotein Ycf48 (338 aa).

A signal peptide spans 1 to 23; the sequence is MKKIITSFPNLLLSILLCFVLSS. The N-palmitoyl cysteine moiety is linked to residue cysteine 24. Residue cysteine 24 is the site of S-diacylglycerol cysteine attachment.

It belongs to the Ycf48 family. As to quaternary structure, part of early PSII assembly complexes which includes D1 (psbA) and PsbI; not found in mature PSII. Binds to the lumenal side of PSII complexes. Interacts with YidC.

Its subcellular location is the cellular thylakoid membrane. Functionally, a factor required for optimal assembly of photosystem II (PSII), acting in the early stages of PSII assembly. Also plays a role in replacement of photodamaged D1 (psbA). Assists YidC in synthesis of chlorophyll-binding proteins. This Prochlorococcus marinus (strain MIT 9312) protein is Photosystem II assembly lipoprotein Ycf48.